The chain runs to 352 residues: tRNA N6-adenosine threonylcarbamoyltransferase (352 aa).

Fe cation contacts are provided by histidine 109 and histidine 113. Residues 136–140 (TVSGG), aspartate 169, glycine 182, aspartate 186, and asparagine 284 contribute to the substrate site. Residue aspartate 312 coordinates Fe cation.

It belongs to the KAE1 / TsaD family. It depends on Fe(2+) as a cofactor.

The protein resides in the cytoplasm. The catalysed reaction is L-threonylcarbamoyladenylate + adenosine(37) in tRNA = N(6)-L-threonylcarbamoyladenosine(37) in tRNA + AMP + H(+). In terms of biological role, required for the formation of a threonylcarbamoyl group on adenosine at position 37 (t(6)A37) in tRNAs that read codons beginning with adenine. Is involved in the transfer of the threonylcarbamoyl moiety of threonylcarbamoyl-AMP (TC-AMP) to the N6 group of A37, together with TsaE and TsaB. TsaD likely plays a direct catalytic role in this reaction. The polypeptide is tRNA N6-adenosine threonylcarbamoyltransferase (Chloroherpeton thalassium (strain ATCC 35110 / GB-78)).